The sequence spans 95 residues: Co-chaperonin GroES (95 aa).

It belongs to the GroES chaperonin family. As to quaternary structure, heptamer of 7 subunits arranged in a ring. Interacts with the chaperonin GroEL.

It localises to the cytoplasm. Functionally, together with the chaperonin GroEL, plays an essential role in assisting protein folding. The GroEL-GroES system forms a nano-cage that allows encapsulation of the non-native substrate proteins and provides a physical environment optimized to promote and accelerate protein folding. GroES binds to the apical surface of the GroEL ring, thereby capping the opening of the GroEL channel. The sequence is that of Co-chaperonin GroES from Ruegeria pomeroyi (strain ATCC 700808 / DSM 15171 / DSS-3) (Silicibacter pomeroyi).